The following is a 639-amino-acid chain: Polyphenol oxidase, chloroplastic (639 aa).

The transit peptide at Met1 to Ala101 directs the protein to the chloroplast. Residues Gly35 to Gln58 form a disordered region. 2 disulfides stabilise this stretch: Cys111-Cys127 and Cys126-Cys194. Positions 193, 214, 223, 354, 358, and 388 each coordinate Cu cation. Positions Cys197–His214 form a cross-link, 2'-(S-cysteinyl)-histidine (Cys-His).

The protein belongs to the tyrosinase family. Cu(2+) serves as cofactor.

It localises to the plastid. The protein localises to the chloroplast thylakoid lumen. The enzyme catalyses 2 catechol + O2 = 2 1,2-benzoquinone + 2 H2O. In terms of biological role, catalyzes the oxidation of mono- and o-diphenols to o-diquinones. This is Polyphenol oxidase, chloroplastic from Spinacia oleracea (Spinach).